The chain runs to 513 residues: ATP synthase subunit alpha (513 aa).

Residue 169–176 (GDRKTGKS) participates in ATP binding.

The protein belongs to the ATPase alpha/beta chains family. In terms of assembly, F-type ATPases have 2 components, CF(1) - the catalytic core - and CF(0) - the membrane proton channel. CF(1) has five subunits: alpha(3), beta(3), gamma(1), delta(1), epsilon(1). CF(0) has three main subunits: a(1), b(2) and c(9-12). The alpha and beta chains form an alternating ring which encloses part of the gamma chain. CF(1) is attached to CF(0) by a central stalk formed by the gamma and epsilon chains, while a peripheral stalk is formed by the delta and b chains.

Its subcellular location is the cell membrane. The catalysed reaction is ATP + H2O + 4 H(+)(in) = ADP + phosphate + 5 H(+)(out). Functionally, produces ATP from ADP in the presence of a proton gradient across the membrane. The alpha chain is a regulatory subunit. This is ATP synthase subunit alpha from Levilactobacillus brevis (strain ATCC 367 / BCRC 12310 / CIP 105137 / JCM 1170 / LMG 11437 / NCIMB 947 / NCTC 947) (Lactobacillus brevis).